We begin with the raw amino-acid sequence, 450 residues long: MRECISIHIGQAGIQVGNACWELYCLEHGIQPDGQMPSDKTVGGGDDAFNTFFSETGAGKHVPRAVFVDLEPTVIDEVRTGTYRQLFHPEQLISGKEDAANNFARGHYTIGKEIVDLCLDRIRKLADNCTGLQGFLVFNAVGGGTGSGLGSLLLERLSVDYGKKSKLGFTVYPSPQVSTSVVEPYNSVLSTHSLLEHTDVSILLDNEAIYDICRRSLSIERPTYTNLNRLVSQVISSLTASLRFDGALNVDVTEFQTNLVPYPRIHFMLSSYAPVISAEKAFHEQLSVAEITNSAFEPASMMAKCDPRHGKYMACCLMYRGDVVPKDVNAAVGTIKTKRTIQFVDWCPTGFKCGINYQPPTVVPGGDLAKVQRAVCMISNSTSVAEVFSRIDHKFDLMYAKRAFVHWYVGEGMEEGEFSEAREDLAALEKDYEEVGAEGGDDEDDEGEEY.

Residues Gln-11, Glu-71, Gly-144, Thr-145, Thr-179, Asn-206, and Asn-228 each contribute to the GTP site. Residue Glu-71 participates in Mg(2+) binding. Glu-254 is a catalytic residue. Thr-349 is subject to Phosphothreonine. Residues 430 to 450 (KDYEEVGAEGGDDEDDEGEEY) form a disordered region. Over residues 431–450 (DYEEVGAEGGDDEDDEGEEY) the composition is skewed to acidic residues.

It belongs to the tubulin family. As to quaternary structure, dimer of alpha and beta chains. A typical microtubule is a hollow water-filled tube with an outer diameter of 25 nm and an inner diameter of 15 nM. Alpha-beta heterodimers associate head-to-tail to form protofilaments running lengthwise along the microtubule wall with the beta-tubulin subunit facing the microtubule plus end conferring a structural polarity. Microtubules usually have 13 protofilaments but different protofilament numbers can be found in some organisms and specialized cells. The cofactor is Mg(2+). Undergoes a tyrosination/detyrosination cycle, the cyclic removal and re-addition of a C-terminal tyrosine residue by the enzymes tubulin tyrosine carboxypeptidase (TTCP) and tubulin tyrosine ligase (TTL), respectively. In terms of processing, acetylation of alpha chains at Lys-40 stabilizes microtubules and affects affinity and processivity of microtubule motors. This modification has a role in multiple cellular functions, ranging from cell motility, cell cycle progression or cell differentiation to intracellular trafficking and signaling.

It localises to the cytoplasm. Its subcellular location is the cytoskeleton. The enzyme catalyses GTP + H2O = GDP + phosphate + H(+). Its function is as follows. Tubulin is the major constituent of microtubules, a cylinder consisting of laterally associated linear protofilaments composed of alpha- and beta-tubulin heterodimers. Microtubules grow by the addition of GTP-tubulin dimers to the microtubule end, where a stabilizing cap forms. Below the cap, tubulin dimers are in GDP-bound state, owing to GTPase activity of alpha-tubulin. This chain is Tubulin alpha-2 chain (TUBA2), found in Arabidopsis thaliana (Mouse-ear cress).